We begin with the raw amino-acid sequence, 681 residues long: 2-(S-pantetheinyl)-carbapenam-3-carboxylate methyltransferase (681 aa).

One can recognise a B12-binding domain in the interval 1–144 (MTVPAARSGR…IERLADHPDY (144 aa)). Residues Asn-18, Ser-72, Tyr-74, Val-75, His-103, Gly-126, and Glu-127 each coordinate cob(II)alamin. A Radical SAM core domain is found at 192 to 417 (RDLRFYALWE…RLYVEEPGTP (226 aa)). [4Fe-4S] cluster-binding residues include Cys-206 and Cys-210. Phe-212 lines the 5'-deoxyadenosine pocket. [4Fe-4S] cluster is bound at residue Cys-213. Cob(II)alamin is bound by residues Asp-214 and Cys-249. 3 residues coordinate 5'-deoxyadenosine: Gln-312, Glu-349, and Gly-384.

The protein belongs to the methyltransferase superfamily. It depends on [4Fe-4S] cluster as a cofactor. Cob(II)alamin serves as cofactor.

It catalyses the reaction (2R,3R,5S)-2-(S-pantetheinyl)-carbapenam-3-carboxylate + AH2 + 2 S-adenosyl-L-methionine = (2R,3R,5S,6R)-6-(methyl)-2-(S-pantetheinyl)-carbapenam-3-carboxylate + 5'-deoxyadenosine + L-methionine + A + S-adenosyl-L-homocysteine + 2 H(+). The enzyme catalyses (2R,3R,5S,6R)-6-(methyl)-2-(S-pantetheinyl)-carbapenam-3-carboxylate + AH2 + 2 S-adenosyl-L-methionine = (2R,3R,5S,6R)-6-(ethyl)-2-(S-pantetheinyl)-carbapenam-3-carboxylate + 5'-deoxyadenosine + L-methionine + A + S-adenosyl-L-homocysteine + 2 H(+). It participates in antibiotic biosynthesis. Methyltransferase involved in the biosynthesis of the beta-lactam carbapenem antibiotic thienamycin. Catalyzes two consecutive S-adenosyl-L-methionine-dependent methylations to build out the C6-ethyl side chain in a stereocontrolled manner. In vitro can use methyl viologen and NADPH as the iron-sulfur cluster reductants. The sequence is that of 2-(S-pantetheinyl)-carbapenam-3-carboxylate methyltransferase from Streptantibioticus cattleyicolor (strain ATCC 35852 / DSM 46488 / JCM 4925 / NBRC 14057 / NRRL 8057) (Streptomyces cattleya).